The chain runs to 436 residues: tRNA(Ile)-lysidine synthase (436 aa).

Residue 27–32 participates in ATP binding; the sequence is SGGVDS.

This sequence belongs to the tRNA(Ile)-lysidine synthase family.

It localises to the cytoplasm. The catalysed reaction is cytidine(34) in tRNA(Ile2) + L-lysine + ATP = lysidine(34) in tRNA(Ile2) + AMP + diphosphate + H(+). Ligates lysine onto the cytidine present at position 34 of the AUA codon-specific tRNA(Ile) that contains the anticodon CAU, in an ATP-dependent manner. Cytidine is converted to lysidine, thus changing the amino acid specificity of the tRNA from methionine to isoleucine. This is tRNA(Ile)-lysidine synthase from Vibrio vulnificus (strain CMCP6).